The sequence spans 524 residues: GMP synthase [glutamine-hydrolyzing] (524 aa).

The 199-residue stretch at arginine 9–asparagine 207 folds into the Glutamine amidotransferase type-1 domain. Cysteine 86 serves as the catalytic Nucleophile. Residues histidine 181 and glutamate 183 contribute to the active site. Positions tryptophan 208–arginine 399 constitute a GMPS ATP-PPase domain. Serine 235–alanine 241 is a binding site for ATP.

In terms of assembly, homodimer.

The enzyme catalyses XMP + L-glutamine + ATP + H2O = GMP + L-glutamate + AMP + diphosphate + 2 H(+). The protein operates within purine metabolism; GMP biosynthesis; GMP from XMP (L-Gln route): step 1/1. Functionally, catalyzes the synthesis of GMP from XMP. The polypeptide is GMP synthase [glutamine-hydrolyzing] (Coxiella burnetii (strain RSA 331 / Henzerling II)).